The sequence spans 296 residues: Sulfotransferase 1E1 (296 aa).

49-54 (KSGTTW) contacts 3'-phosphoadenylyl sulfate. Position 107–109 (107–109 (KTH)) interacts with substrate. H109 (proton acceptor) is an active-site residue. Residues R131, S139, Y194, 228–233 (TSFQEM), and 258–260 (RKG) contribute to the 3'-phosphoadenylyl sulfate site.

It belongs to the sulfotransferase 1 family. Homodimer. Post-translationally, the N-terminus is blocked. In terms of tissue distribution, adrenal gland and much less in liver. Detectable only during pregnancy in uterine.

The protein resides in the cytoplasm. Its subcellular location is the cytosol. The catalysed reaction is estrone + 3'-phosphoadenylyl sulfate = estrone 3-sulfate + adenosine 3',5'-bisphosphate + H(+). It carries out the reaction (24S)-hydroxycholesterol + 3'-phosphoadenylyl sulfate = (24S)-hydroxycholesterol 3-sulfate + adenosine 3',5'-bisphosphate + H(+). It catalyses the reaction 17beta-estradiol + 3'-phosphoadenylyl sulfate = 17beta-estradiol 3-sulfate + adenosine 3',5'-bisphosphate + H(+). The enzyme catalyses 3beta-hydroxyandrost-5-en-17-one + 3'-phosphoadenylyl sulfate = dehydroepiandrosterone 3-sulfate + adenosine 3',5'-bisphosphate + H(+). The catalysed reaction is 4-ethylphenol + 3'-phosphoadenylyl sulfate = 4-ethylphenyl sulfate + adenosine 3',5'-bisphosphate + H(+). Inhibited by estradiol. Sulfotransferase that utilizes 3'-phospho-5'-adenylyl sulfate (PAPS) as sulfonate donor to catalyze the sulfate conjugation of estradiol and estrone. Is a key enzyme in estrogen homeostasis, the sulfation of estrogens leads to their inactivation. Also sulfates dehydroepiandrosterone (DHEA), pregnenolone, (24S)-hydroxycholesteroland xenobiotic compounds like ethinylestradiol, equalenin, diethyl stilbesterol and 1-naphthol at significantly lower efficiency. Does not sulfonate cortisol, testosterone and dopamine. May play a role in gut microbiota-host metabolic interaction. O-sulfonates 4-ethylphenol (4-EP), a dietary tyrosine-derived metabolite produced by gut bacteria. The product 4-EPS crosses the blood-brain barrier and may negatively regulate oligodendrocyte maturation and myelination, affecting the functional connectivity of different brain regions associated with the limbic system. The polypeptide is Sulfotransferase 1E1 (SULT1E1) (Cavia porcellus (Guinea pig)).